The following is a 115-amino-acid chain: ATP synthase subunits region ORF 7 (115 aa).

The chain is ATP synthase subunits region ORF 7 from Fuscovulum blasticum (Rhodobacter blasticus).